The sequence spans 38 residues: Large ribosomal subunit protein bL36 (38 aa).

It belongs to the bacterial ribosomal protein bL36 family.

In Methylacidiphilum infernorum (isolate V4) (Methylokorus infernorum (strain V4)), this protein is Large ribosomal subunit protein bL36.